Here is a 168-residue protein sequence, read N- to C-terminus: Putative B3 domain-containing protein Os10g0158600 (168 aa).

The TF-B3 DNA-binding region spans 4–97 (VVFASARLNA…KARVMLLNRQ (94 aa)). The tract at residues 105 to 151 (KTPSTTSSDKNRSLSPSDQLTRASTSAHPSTSKSIPPLRNGTGSTKR) is disordered. The segment covering 106-138 (TPSTTSSDKNRSLSPSDQLTRASTSAHPSTSKS) has biased composition (polar residues).

Its subcellular location is the nucleus. This is Putative B3 domain-containing protein Os10g0158600 from Oryza sativa subsp. japonica (Rice).